Consider the following 548-residue polypeptide: Methyl-accepting chemotaxis protein HlyB (548 aa).

The Cytoplasmic segment spans residues 1–10 (MIINKFSLKW). Residues 11–31 (MLAIAVAIPAIALLFVAFTSL) traverse the membrane as a helical segment. Topologically, residues 32 to 199 (NTMSVMQAQS…SFEAGRTKQM (168 aa)) are periplasmic. Residues 200-220 (VIIAAGLIISFITSLVIITNL) form a helical membrane-spanning segment. The 54-residue stretch at 218–271 (TNLRSRVAYLKDRMSSAAANLSLRTRLELDGNDELCDIGKSFNAFIDKVHHSIE) folds into the HAMP domain. Over 221–548 (RSRVAYLKDR…LDKLVGSFEL (328 aa)) the chain is Cytoplasmic. Residues 276 to 512 (NSKELATMAS…DINRNVEDIN (237 aa)) form the Methyl-accepting transducer domain.

Belongs to the methyl-accepting chemotaxis (MCP) protein family.

It is found in the cell inner membrane. In terms of biological role, chemotactic-signal transducers respond to changes in the concentration of attractants and repellents in the environment, transduce a signal from the outside to the inside of the cell, and facilitate sensory adaptation through the variation of the level of methylation. The chain is Methyl-accepting chemotaxis protein HlyB (hlyB) from Vibrio cholerae serotype O1 (strain ATCC 39315 / El Tor Inaba N16961).